Consider the following 228-residue polypeptide: Thrombin-like enzyme gyroxin analog (228 aa).

The 222-residue stretch at 1–222 folds into the Peptidase S1 domain; it reads VIGGDECNIN…YLDWIQSVIA (222 aa). 6 disulfides stabilise this stretch: cysteine 7-cysteine 138, cysteine 28-cysteine 44, cysteine 78-cysteine 227, cysteine 117-cysteine 183, cysteine 149-cysteine 162, and cysteine 173-cysteine 198. Histidine 43 acts as the Charge relay system in catalysis. 2 N-linked (GlcNAc...) asparagine glycosylation sites follow: asparagine 45 and asparagine 81. Residue aspartate 88 is the Charge relay system of the active site. Residue asparagine 145 is glycosylated (N-linked (GlcNAc...) asparagine). Residue serine 177 is the Charge relay system of the active site. Asparagine 224 is a glycosylation site (N-linked (GlcNAc...) asparagine).

Belongs to the peptidase S1 family. Snake venom subfamily. In terms of assembly, monomer. Expressed by the venom gland.

The protein localises to the secreted. The enzyme catalyses Selective cleavage of Arg-|-Xaa bond in fibrinogen, to form fibrin, and release fibrinopeptide A. The specificity of further degradation of fibrinogen varies with species origin of the enzyme.. Its activity is regulated as follows. Inhibited competitively by amidines and guanidines, and irreversibly inhibited by diisopropylfluorophosphate. Functionally, thrombin-like snake venom serine protease, that cleaves alpha-chain of fibrinogen (FGA) releases only fibrinopeptide A. Shows coagulant, esterase and amidase activities. Induces the barrel rotation syndrome in mice, which is manifested by gyroxin-like, rapid rolling motions. May also reversibly increase the permeability of the blood brain barrier (BBB) in mice. This chain is Thrombin-like enzyme gyroxin analog, found in Lachesis muta muta (Bushmaster).